The primary structure comprises 294 residues: Pyridoxal 5'-phosphate synthase subunit PdxS (294 aa).

D24 serves as a coordination point for D-ribose 5-phosphate. K81 (schiff-base intermediate with D-ribose 5-phosphate) is an active-site residue. Position 153 (G153) interacts with D-ribose 5-phosphate. R165 is a binding site for D-glyceraldehyde 3-phosphate. Residues G214 and 235 to 236 (GS) contribute to the D-ribose 5-phosphate site.

This sequence belongs to the PdxS/SNZ family. In terms of assembly, in the presence of PdxT, forms a dodecamer of heterodimers.

The enzyme catalyses aldehydo-D-ribose 5-phosphate + D-glyceraldehyde 3-phosphate + L-glutamine = pyridoxal 5'-phosphate + L-glutamate + phosphate + 3 H2O + H(+). Its pathway is cofactor biosynthesis; pyridoxal 5'-phosphate biosynthesis. Catalyzes the formation of pyridoxal 5'-phosphate from ribose 5-phosphate (RBP), glyceraldehyde 3-phosphate (G3P) and ammonia. The ammonia is provided by the PdxT subunit. Can also use ribulose 5-phosphate and dihydroxyacetone phosphate as substrates, resulting from enzyme-catalyzed isomerization of RBP and G3P, respectively. This chain is Pyridoxal 5'-phosphate synthase subunit PdxS, found in Bacillus velezensis (strain DSM 23117 / BGSC 10A6 / LMG 26770 / FZB42) (Bacillus amyloliquefaciens subsp. plantarum).